Consider the following 507-residue polypeptide: Alkyl hydroperoxide reductase subunit F (507 aa).

Asp207–Ile222 contributes to the FAD binding site. Cys335 and Cys338 form a disulfide bridge. Asp347–Ala361 is a binding site for NAD(+). Thr467–Asp477 provides a ligand contact to FAD.

The protein belongs to the class-II pyridine nucleotide-disulfide oxidoreductase family. As to quaternary structure, homodimer. The cofactor is FAD.

Functionally, serves to protect the cell against DNA damage by alkyl hydroperoxides. It can use either NADH or NADPH as electron donor for direct reduction of redox dyes or of alkyl hydroperoxides when combined with the AhpC protein. This Staphylococcus epidermidis (strain ATCC 35984 / DSM 28319 / BCRC 17069 / CCUG 31568 / BM 3577 / RP62A) protein is Alkyl hydroperoxide reductase subunit F (ahpF).